A 201-amino-acid polypeptide reads, in one-letter code: Putative lipoprotein Hmuk_2215 (201 aa).

Residues 1–22 (MCPRPRRAVLLGLGVAMSAIAG) form the signal peptide. C23 carries the N-acetylcysteine modification. Residue C23 is the site of S-archaeol cysteine attachment. 2 disordered regions span residues 25 to 78 (ETAP…ETSE) and 182 to 201 (ATRAVQQGPEPAEFDDGDCP). Over residues 69–78 (TRADETETSE) the composition is skewed to basic and acidic residues.

It is found in the cell membrane. This Halomicrobium mukohataei (strain ATCC 700874 / DSM 12286 / JCM 9738 / NCIMB 13541) (Haloarcula mukohataei) protein is Putative lipoprotein Hmuk_2215.